We begin with the raw amino-acid sequence, 294 residues long: GTP cyclohydrolase FolE2 (294 aa).

The protein belongs to the GTP cyclohydrolase IV family.

The enzyme catalyses GTP + H2O = 7,8-dihydroneopterin 3'-triphosphate + formate + H(+). Its pathway is cofactor biosynthesis; 7,8-dihydroneopterin triphosphate biosynthesis; 7,8-dihydroneopterin triphosphate from GTP: step 1/1. Its function is as follows. Converts GTP to 7,8-dihydroneopterin triphosphate. This Acinetobacter baylyi (strain ATCC 33305 / BD413 / ADP1) protein is GTP cyclohydrolase FolE2.